The chain runs to 533 residues: Berberine bridge enzyme-like 28 (533 aa).

A signal peptide spans 1–23 (MEFSSFLFTILLFSLNISPLVSA). C34 and C96 are disulfide-bonded. Positions 74-249 (ETPKPVSIIT…LSWKVKLVDV (176 aa)) constitute an FAD-binding PCMH-type domain. H111 carries the pros-8alpha-FAD histidine modification. 2 N-linked (GlcNAc...) asparagine glycosylation sites follow: N142 and N440.

Belongs to the oxygen-dependent FAD-linked oxidoreductase family. Requires FAD as cofactor.

The protein resides in the secreted. It localises to the cell wall. Involved in adaptation to salt stress. In Arabidopsis thaliana (Mouse-ear cress), this protein is Berberine bridge enzyme-like 28.